The sequence spans 525 residues: Chromaffin granule amine transporter (525 aa).

Over 1–21 (MLRTILDAPQRLLKEGRASRQ) the chain is Cytoplasmic. Residues 22–42 (LVLVVVFVALLLDNMLFTVVV) traverse the membrane as a helical segment. The Lumenal, vesicle segment spans residues 43 to 138 (PIVPTFLYDM…TGFLEEEITR (96 aa)). N-linked (GlcNAc...) asparagine glycans are attached at residues Asn-58, Asn-87, and Asn-104. A helical membrane pass occupies residues 139 to 158 (VGVLFASKAVMQLLVNPFVG). The Cytoplasmic segment spans residues 159-167 (PLTNRIGYH). A helical transmembrane segment spans residues 168–188 (IPMFAGFVIMFLSTVMFAFSG). The Lumenal, vesicle segment spans residues 189 to 197 (TYTLLFVAR). Residues 198 to 218 (TLQGIGSSFSSVAGLGMLASV) form a helical membrane-spanning segment. Residues 219 to 227 (YTDDHERGR) lie on the Cytoplasmic side of the membrane. A helical transmembrane segment spans residues 228 to 250 (AMGTALGGLALGLLVGAPFGSVM). The Lumenal, vesicle portion of the chain corresponds to 251–256 (YEFVGK). Residues 257 to 279 (SAPFLILAFLALLDGALQLCILQ) traverse the membrane as a helical segment. Residues 280-299 (PSKVSPESAKGTPLFMLLKD) are Cytoplasmic-facing. Residues 300 to 319 (PYILVAAGSICFANMGVAIL) form a helical membrane-spanning segment. Residues 320–335 (EPTLPIWMMQTMCSPK) are Lumenal, vesicle-facing. Residues 336-360 (WQLGLAFLPASVSYLIGTNLFGVLA) form a helical membrane-spanning segment. Topologically, residues 361 to 365 (NKMGR) are cytoplasmic. Residues 366–386 (WLCSLIGMLVVGTSLLCVPLA) form a helical membrane-spanning segment. Residues 387–397 (HNIFGLIGPNA) lie on the Lumenal, vesicle side of the membrane. A helical membrane pass occupies residues 398-418 (GLGLAIGMVDSSMMPIMGHLV). Residues 419–422 (DLRH) lie on the Cytoplasmic side of the membrane. The helical transmembrane segment at 423 to 443 (TSVYGSVYAIADVAFCMGFAI) threads the bilayer. At 444-448 (GPSTG) the chain is on the lumenal, vesicle side. Residues 449-470 (GAIVKAIGFPWLMVITGVINIV) form a helical membrane-spanning segment. Topologically, residues 471 to 525 (YAPLCYYLRSPPAKEEKLAILSQDCPMETRMYATQKPTKEFPLGEDSDEEPDHEE) are cytoplasmic. The tract at residues 503–525 (ATQKPTKEFPLGEDSDEEPDHEE) is disordered. The segment covering 513–525 (LGEDSDEEPDHEE) has biased composition (acidic residues).

This sequence belongs to the major facilitator superfamily. Vesicular transporter family. As to expression, expressed primarily in neuroendocrine tissues. Highly expressed in chromaffin cells of the adrenal medulla (at protein level). Detected in peripheral sympathetic ganglia (at protein level). Found in some paracrine cells in stomach and duodenum (at protein level). Expressed in substantia nigra. Expressed in gastrointestinal tract.

Its subcellular location is the cytoplasmic vesicle. The protein localises to the secretory vesicle membrane. It localises to the secretory vesicle. It is found in the synaptic vesicle membrane. The protein resides in the endoplasmic reticulum membrane. The catalysed reaction is serotonin(in) + 2 H(+)(out) = serotonin(out) + 2 H(+)(in). It carries out the reaction (R)-noradrenaline(in) + 2 H(+)(out) = (R)-noradrenaline(out) + 2 H(+)(in). It catalyses the reaction dopamine(in) + 2 H(+)(out) = dopamine(out) + 2 H(+)(in). With respect to regulation, strongly inhibited by reserpine. Also inhibited to a lesser extent by ketanserin and fenfluramine. Not significantly inhibited by tetrabenazine. In terms of biological role, electrogenic antiporter that exchanges one cationic monoamine with two intravesicular protons across the membrane of secretory and synaptic vesicles. Uses the electrochemical proton gradient established by the V-type proton-pump ATPase to accumulate high concentrations of monoamines inside the vesicles prior to their release via exocytosis. Transports catecholamines and indolamines with higher affinity for serotonin. Regulates the transvesicular monoaminergic gradient that determines the quantal size. Mediates presynaptic monoaminergic vesicle transport in the amygdala and prefrontal brain regions related with emotion processing in response to environmental stimuli. Unable to uptake serotonin. In Homo sapiens (Human), this protein is Chromaffin granule amine transporter (SLC18A1).